Consider the following 596-residue polypeptide: Proline--tRNA ligase (596 aa).

The protein belongs to the class-II aminoacyl-tRNA synthetase family. ProS type 1 subfamily. In terms of assembly, homodimer.

It is found in the cytoplasm. It catalyses the reaction tRNA(Pro) + L-proline + ATP = L-prolyl-tRNA(Pro) + AMP + diphosphate. Catalyzes the attachment of proline to tRNA(Pro) in a two-step reaction: proline is first activated by ATP to form Pro-AMP and then transferred to the acceptor end of tRNA(Pro). As ProRS can inadvertently accommodate and process non-cognate amino acids such as alanine and cysteine, to avoid such errors it has two additional distinct editing activities against alanine. One activity is designated as 'pretransfer' editing and involves the tRNA(Pro)-independent hydrolysis of activated Ala-AMP. The other activity is designated 'posttransfer' editing and involves deacylation of mischarged Ala-tRNA(Pro). The misacylated Cys-tRNA(Pro) is not edited by ProRS. This chain is Proline--tRNA ligase, found in Prochlorococcus marinus (strain NATL1A).